A 199-amino-acid polypeptide reads, in one-letter code: Potassium-transporting ATPase KdpC subunit (199 aa).

A helical membrane pass occupies residues 7–27; that stretch reads PALVMTAALCLITGIIYPGLI.

This sequence belongs to the KdpC family. The system is composed of three essential subunits: KdpA, KdpB and KdpC.

It is found in the cell inner membrane. Part of the high-affinity ATP-driven potassium transport (or Kdp) system, which catalyzes the hydrolysis of ATP coupled with the electrogenic transport of potassium into the cytoplasm. This subunit acts as a catalytic chaperone that increases the ATP-binding affinity of the ATP-hydrolyzing subunit KdpB by the formation of a transient KdpB/KdpC/ATP ternary complex. The chain is Potassium-transporting ATPase KdpC subunit from Gemmatimonas aurantiaca (strain DSM 14586 / JCM 11422 / NBRC 100505 / T-27).